We begin with the raw amino-acid sequence, 456 residues long: Phosphoglucomutase/phosphomannomutase (456 aa).

Catalysis depends on Ser101, which acts as the Phosphoserine intermediate. Mg(2+) contacts are provided by Ser101, Asp243, Asp245, and Asp247. Phosphoserine; by autocatalysis is present on Ser101.

It belongs to the phosphohexose mutase family. Homotetramer. The cofactor is Mg(2+). Post-translationally, activated by phosphorylation.

It catalyses the reaction alpha-D-glucose 1-phosphate = alpha-D-glucose 6-phosphate. The enzyme catalyses alpha-D-mannose 1-phosphate = D-mannose 6-phosphate. Catalyzes the interconversion of glucose 1-phosphate and glucose 6-phosphate, and the interconversion of mannose 1-phosphate and mannose 6-phosphate. Also displays low activity with deoxyribose 1-phosphate and glucosamine 1-phosphate. The polypeptide is Phosphoglucomutase/phosphomannomutase (Thermococcus kodakarensis (strain ATCC BAA-918 / JCM 12380 / KOD1) (Pyrococcus kodakaraensis (strain KOD1))).